Reading from the N-terminus, the 202-residue chain is ATP-dependent Clp protease proteolytic subunit 1 (202 aa).

Ser101 acts as the Nucleophile in catalysis. The active site involves His126.

Belongs to the peptidase S14 family. Fourteen ClpP subunits assemble into 2 heptameric rings which stack back to back to give a disk-like structure with a central cavity, resembling the structure of eukaryotic proteasomes.

Its subcellular location is the cytoplasm. It catalyses the reaction Hydrolysis of proteins to small peptides in the presence of ATP and magnesium. alpha-casein is the usual test substrate. In the absence of ATP, only oligopeptides shorter than five residues are hydrolyzed (such as succinyl-Leu-Tyr-|-NHMec, and Leu-Tyr-Leu-|-Tyr-Trp, in which cleavage of the -Tyr-|-Leu- and -Tyr-|-Trp bonds also occurs).. Cleaves peptides in various proteins in a process that requires ATP hydrolysis. Has a chymotrypsin-like activity. Plays a major role in the degradation of misfolded proteins. This Rhizobium etli (strain ATCC 51251 / DSM 11541 / JCM 21823 / NBRC 15573 / CFN 42) protein is ATP-dependent Clp protease proteolytic subunit 1.